Consider the following 206-residue polypeptide: Bacterial microcompartment protein trimer-3 (206 aa).

BMC circularly permuted domains are found at residues 2–104 and 105–206; these read ELRA…RLAP and RVVS…DNRG. The Pore gating residues motif lies at 67–68; sequence ER.

Belongs to the EutL/PduB family. Homotrimerizes to form a pseudohexamer. These stack, with the concave faces together, with the concave faces together, in purified bacterial microcompartments (BMC).

It is found in the bacterial microcompartment. Functionally, a minor component of the bacterial microcompartment (BMC) shell. Expression of 5 proteins in E.coli (BMC-H (Hoch_5815), BMC-P (Hoch_5814), and 3 BMC-T (Hoch_5812, Hoch_5816, Hoch_3341)) forms 40 nm artificial BMCs with a molecular mass of 6.5 MDa. One of 2 stacked pseudohexamers in the BMC. There are 20 BMC-T pseudohexamers per BMC, composed of mixed BMC-T1, BMC-T2 and BMC-T3. The shell facets are 20-30 Angstroms thick, with 1 of the stacked BMC-T trimers protruding to the exterior. The stacked trimers may serve as conduits to allow metabolite flux across the protein shell, gated by Arg-68 which contacts Glu-67 in an adjacent subunit; they are flexible enough to play a role in accommodating variations in shell assembly. This Haliangium ochraceum (strain DSM 14365 / JCM 11303 / SMP-2) protein is Bacterial microcompartment protein trimer-3.